The sequence spans 149 residues: Arginine repressor (149 aa).

Belongs to the ArgR family.

Its subcellular location is the cytoplasm. Its pathway is amino-acid biosynthesis; L-arginine biosynthesis [regulation]. Its function is as follows. Regulates arginine biosynthesis genes. In Alkaliphilus oremlandii (strain OhILAs) (Clostridium oremlandii (strain OhILAs)), this protein is Arginine repressor.